The primary structure comprises 92 residues: Small ribosomal subunit protein bS20 (92 aa).

The interval 1–25 is disordered; it reads MANSAQARKRARQAAKANSHNSALR.

This sequence belongs to the bacterial ribosomal protein bS20 family.

Binds directly to 16S ribosomal RNA. This is Small ribosomal subunit protein bS20 from Paraburkholderia phymatum (strain DSM 17167 / CIP 108236 / LMG 21445 / STM815) (Burkholderia phymatum).